Consider the following 97-residue polypeptide: Anti-sigma-YlaC factor YlaD (97 aa).

H29, C33, and C36 together coordinate Zn(2+). The chain crosses the membrane as a helical span at residues Y71–I93.

The protein belongs to the zinc-associated anti-sigma factor (ZAS) superfamily. Zn(2+) serves as cofactor.

The protein localises to the cell membrane. Its function is as follows. Anti-sigma factor for YlaC. This is Anti-sigma-YlaC factor YlaD (ylaD) from Bacillus subtilis (strain 168).